A 370-amino-acid polypeptide reads, in one-letter code: tRNA-specific 2-thiouridylase MnmA (370 aa).

ATP contacts are provided by residues G11 to S18 and M37. Residues N97–D99 are interaction with target base in tRNA. The Nucleophile role is filled by C102. C102 and C199 are disulfide-bonded. G126 contributes to the ATP binding site. Residues K149–Q151 form an interaction with tRNA region. The active-site Cysteine persulfide intermediate is the C199. The tract at residues R307–Y308 is interaction with tRNA.

The protein belongs to the MnmA/TRMU family.

Its subcellular location is the cytoplasm. The catalysed reaction is S-sulfanyl-L-cysteinyl-[protein] + uridine(34) in tRNA + AH2 + ATP = 2-thiouridine(34) in tRNA + L-cysteinyl-[protein] + A + AMP + diphosphate + H(+). Its function is as follows. Catalyzes the 2-thiolation of uridine at the wobble position (U34) of tRNA, leading to the formation of s(2)U34. This chain is tRNA-specific 2-thiouridylase MnmA, found in Staphylococcus carnosus (strain TM300).